The sequence spans 131 residues: Small ribosomal subunit protein uS8 (131 aa).

Belongs to the universal ribosomal protein uS8 family. Part of the 30S ribosomal subunit. Contacts proteins S5 and S12.

Its function is as follows. One of the primary rRNA binding proteins, it binds directly to 16S rRNA central domain where it helps coordinate assembly of the platform of the 30S subunit. The chain is Small ribosomal subunit protein uS8 from Dictyoglomus thermophilum (strain ATCC 35947 / DSM 3960 / H-6-12).